Consider the following 56-residue polypeptide: Male determiner protein Yob (56 aa).

Male determiner protein (M-factor) that controls male somatic sexual differentiation. Acts as a dominant factor that regulates the mRNA splicing of doublesex (dsx) transcripts and promotes expression of male splice forms of dsx. This is Male determiner protein Yob from Anopheles gambiae (African malaria mosquito).